A 170-amino-acid chain; its full sequence is Small ribosomal subunit protein uS3mB (170 aa).

Residues 1-30 (MAAPVMSAFGRLQGLIRTERSLLTHVQSRC) constitute a mitochondrion transit peptide.

Belongs to the universal ribosomal protein uS3 family. Component of the mitochondrial ribosome small subunit (28S) which comprises a 12S rRNA and about 30 distinct proteins.

The protein resides in the mitochondrion. The sequence is that of Small ribosomal subunit protein uS3mB (mrps24-b) from Xenopus laevis (African clawed frog).